The sequence spans 363 residues: UDP-3-O-acylglucosamine N-acyltransferase (363 aa).

Catalysis depends on His252, which acts as the Proton acceptor.

This sequence belongs to the transferase hexapeptide repeat family. LpxD subfamily. In terms of assembly, homotrimer.

The enzyme catalyses a UDP-3-O-[(3R)-3-hydroxyacyl]-alpha-D-glucosamine + a (3R)-hydroxyacyl-[ACP] = a UDP-2-N,3-O-bis[(3R)-3-hydroxyacyl]-alpha-D-glucosamine + holo-[ACP] + H(+). It functions in the pathway bacterial outer membrane biogenesis; LPS lipid A biosynthesis. Catalyzes the N-acylation of UDP-3-O-acylglucosamine using 3-hydroxyacyl-ACP as the acyl donor. Is involved in the biosynthesis of lipid A, a phosphorylated glycolipid that anchors the lipopolysaccharide to the outer membrane of the cell. This is UDP-3-O-acylglucosamine N-acyltransferase from Cupriavidus necator (strain ATCC 17699 / DSM 428 / KCTC 22496 / NCIMB 10442 / H16 / Stanier 337) (Ralstonia eutropha).